The chain runs to 262 residues: tRNA pseudouridine synthase A 2 (262 aa).

Catalysis depends on Asp-66, which acts as the Nucleophile. Tyr-125 provides a ligand contact to substrate.

It belongs to the tRNA pseudouridine synthase TruA family. Homodimer.

It catalyses the reaction uridine(38/39/40) in tRNA = pseudouridine(38/39/40) in tRNA. Formation of pseudouridine at positions 38, 39 and 40 in the anticodon stem and loop of transfer RNAs. The protein is tRNA pseudouridine synthase A 2 of Protochlamydia amoebophila (strain UWE25).